The primary structure comprises 117 residues: MKHRIGRVETQIQREVDDILLKDVNDPRVKGVTITGVKLTGDLQHATIFYSILDDAPDKVEAAQTGLDKASGLIRREVGQRIRLFKVPEIEFAQDKSVQYGARIDQLINEVRRKNLE.

This sequence belongs to the RbfA family. Monomer. Binds 30S ribosomal subunits, but not 50S ribosomal subunits or 70S ribosomes.

The protein resides in the cytoplasm. Its function is as follows. One of several proteins that assist in the late maturation steps of the functional core of the 30S ribosomal subunit. Associates with free 30S ribosomal subunits (but not with 30S subunits that are part of 70S ribosomes or polysomes). Required for efficient processing of 16S rRNA. May interact with the 5'-terminal helix region of 16S rRNA. The sequence is that of Ribosome-binding factor A from Lacticaseibacillus casei (strain BL23) (Lactobacillus casei).